A 988-amino-acid chain; its full sequence is Chloride channel protein 1 (988 aa).

Topologically, residues 1–118 are cytoplasmic; it reads MEQSRSQQRG…VVRRKLGEDG (118 aa). Residues 65 to 75 are compositionally biased toward basic and acidic residues; that stretch reads HKEQFSDREQD. The interval 65–92 is disordered; it reads HKEQFSDREQDIGMPKKTGSSSTVDSKD. The chain crosses the membrane as a helical span at residues 119–150; the sequence is IFLVLLGLLMALVSWSMDYVSAKSLQAYKWSY. Residues 151 to 158 lie on the Extracellular side of the membrane; sequence AQMQPSLP. Residues 159–179 traverse the membrane as a helical segment; that stretch reads LQFLVWVTFPLVLILFSALFC. The Cytoplasmic segment spans residues 180-183; sequence HLIS. Positions 184–189 form an intramembrane region, note=Loop between two helices; it reads PQAVGS. The Selectivity filter part_1 signature appears at 188–192; it reads GSGIP. Residue serine 189 coordinates chloride. Residues 190-195 constitute an intramembrane region (helical); it reads GIPEMK. Over 196–208 the chain is Cytoplasmic; sequence TILRGVVLKEYLT. An intramembrane region (helical) is located at residues 209-224; it reads MKAFVAKVVALTAGLG. The note=Loop between two helices intramembrane region spans 225–230; the sequence is SGIPVG. The Selectivity filter part_2 motif lies at 230–234; it reads GKEGP. Positions 231 to 246 form an intramembrane region, helical; it reads KEGPFVHIASICAAVL. The Cytoplasmic portion of the chain corresponds to 247 to 268; sequence SKFMSVFCGVYEQPYYYSDILT. 2 consecutive intramembrane regions (helical) follow at residues 269–280 and 281–290; these read VGCAVGVGCCFG and TPLGGVLFSI. Topologically, residues 291-301 are cytoplasmic; it reads EVTSTYFAVRN. A helical transmembrane segment spans residues 302-321; sequence YWRGFFAATFSAFVFRVLAV. At 322-347 the chain is on the extracellular side; sequence WNKDAVTITALFRTNFRMDFPFDLKE. The helical transmembrane segment at 348 to 376 threads the bilayer; it reads LPAFAAIGICCGLLGAVFVYLHRQVMLGV. The Cytoplasmic segment spans residues 377–390; sequence RKHKALSQFLAKHR. A helical membrane pass occupies residues 391–408; it reads LLYPGIVTFVIASFTFPP. Over 409–414 the chain is Extracellular; sequence GMGQFM. An intramembrane region (note=Loop between two helices) is located at residues 415 to 418; the sequence is AGEL. An intramembrane region (helical) is located at residues 419–426; it reads MPREAIST. At 427–457 the chain is on the extracellular side; it reads LFDNNTWVKHAGDPESLGQSAVWIHPRVNVV. An intramembrane region (helical) is located at residues 458 to 475; sequence IIIFLFFVMKFWMSIVAT. Residues 476–482 constitute an intramembrane region (note=Loop between two helices); the sequence is TMPIPCG. The Selectivity filter part_3 signature appears at 482 to 486; the sequence is GGFMP. Residues 483 to 498 constitute an intramembrane region (helical); it reads GFMPVFVLGAAFGRLV. Phenylalanine 484 serves as a coordination point for chloride. Topologically, residues 499–521 are extracellular; sequence GEIMAMLFPDGILFDDIIYKILP. An intramembrane region (helical) is located at residues 522–538; that stretch reads GGYAVIGAAALTGAVSH. The segment at residues 539–540 is an intramembrane region (note=Loop between two helices); it reads TV. Residues 541–554 constitute an intramembrane region (helical); it reads STAVICFELTGQIA. Over 555-557 the chain is Extracellular; that stretch reads HIL. The segment at residues 558 to 571 is an intramembrane region (helical); the sequence is PMMVAVILANMVAQ. Positions 572–575 form an intramembrane region, note=Loop between two helices; sequence SLQP. The helical intramembrane region spans 576–578; the sequence is SLY. Tyrosine 578 is a binding site for chloride. Residues 579–988 are Cytoplasmic-facing; it reads DSIIQVKKLP…DEEDEDELIL (410 aa). Residues 609–668 form the CBS 1 domain; it reads MVRDVKFVSASYTYGELRTLLQTTTVKTLPLVDSKDSMILLGSVERSELQALLQRHLCPE. Residues 713–764 are disordered; the sequence is EDEDEDLSGKSELPPSLALHPSTTAPLSPEEPNGPLPGHKQQPEAPEPAGQR. The region spanning 821 to 876 is the CBS 2 domain; it reads IDQSPFQLVEQTTLHKTHTLFSLLGLHLAYVTSMGKLRGVLALEELQKAIEGHTKS. A disordered region spans residues 880–988; the sequence is LRPPLASFRN…DEEDEDELIL (109 aa). Phosphoserine is present on serine 886. Residues 887–906 show a composition bias toward polar residues; sequence FRNTTSTRKSTGAPPSSAEN. The span at 929 to 941 shows a compositional bias: pro residues; it reads TPVPSPSPEPPLS. Acidic residues-rich tracts occupy residues 950-967 and 979-988; these read ELEE…EELA and DEEDEDELIL.

This sequence belongs to the chloride channel (TC 2.A.49) family. ClC-1/CLCN1 subfamily. In terms of assembly, homodimer. In terms of tissue distribution, predominantly expressed in skeletal muscles.

It localises to the cell membrane. The protein resides in the sarcolemma. The protein localises to the T-tubule. It catalyses the reaction chloride(in) = chloride(out). The enzyme catalyses thiocyanate(in) = thiocyanate(out). The catalysed reaction is bromide(in) = bromide(out). It carries out the reaction nitrate(in) = nitrate(out). It catalyses the reaction iodide(out) = iodide(in). Its activity is regulated as follows. Modulated by membrane voltage with depolarization favouring channel opening and hyperpolarization favouring channel closure. Inhibited by acidic pH and ATP binding due to a shift of voltage dependence of common gating to more positive voltages. Inhibited by 9-anthracene-carboxylic. Functionally, voltage-gated chloride channel involved in skeletal muscle excitability. Generates most of the plasma membrane chloride conductance in skeletal muscle fibers, stabilizes the resting membrane potential and contributes to the repolarization phase during action potential firing. Forms a homodimeric channel where each subunit has its own ion conduction pathway. Conducts double-barreled currents controlled by two types of gates, two fast glutamate gates that control each subunit independently and a slow common gate that opens and shuts off both subunits simultaneously. Has a significant open probability at muscle resting potential and is further activated upon membrane depolarization. Permeable to small monovalent anions with ion selectivity for chloride &gt; thiocyanate &gt; bromide &gt; nitrate &gt; iodide. The sequence is that of Chloride channel protein 1 from Homo sapiens (Human).